A 35-amino-acid chain; its full sequence is Sperm-specific protein Phi-1 (35 aa).

Basic residues-rich tracts occupy residues 1–17 (PSPT…RSRS) and 25–35 (AAKRAKSKTAK). Residues 1–35 (PSPTRRSKSRSKSRSRSRSASAGKAAKRAKSKTAK) are disordered.

As to expression, sperm.

It localises to the nucleus. The protein localises to the chromosome. Functionally, involved in nuclear basic protein transition: histones are replaced by spermatid specific proteins which are themselves replaced by protamines in late spermatids. The polypeptide is Sperm-specific protein Phi-1 (Mytilus californianus (California mussel)).